A 519-amino-acid polypeptide reads, in one-letter code: MKYRDLRDFIHGLEQRGELRRVTQPVSPVLEMTELCDRVLRAGGPALLFDAPAGHRFPVLGNLFGTPRRVALGMGVDADDEAALASLRDIGRLLSALKEPDPPKRLKDAGKLLSLAKAVWDMGPKTVSAPPCQEIVWEGDDVDLHKLPIQTCWPGDAGPLLTWGLTVTRGPNKTRQNLGIYRQQLIGRNKLIMRWLAHRGGALDFREFALKHPGQPYPVAVVLGADPATMLGAVTPVPDSLSEYQFAGLLRGARTELAKCVTPGVDALQVPARAEIVLEGFIHPQQGAPAPAPEGAPPRPAAGAAAGYEHALEGPYGDHTGYYNEQEWFPVFTVERITMRRDAIYHSTYTGKPPDEPAVLGVALNEVFVPLLQKQFAEITDFYLPPEGCSYRMAIVQMKKSYAGHAKRVMFGVWSFLRQFMYTKFIVVVDEDVNVRDWKEVIWAITTRVDPARDTVLVENTPIDYLDFASPVAGLGSKMGLDATNKWPGETQREWGRPIEMDAAVKARVDRLWTEIGLS.

A Mn(2+)-binding site is contributed by asparagine 177. Residues isoleucine 180 to arginine 182, arginine 194 to leucine 196, and arginine 199 to glycine 200 each bind prenylated FMN. Glutamate 243 lines the Mn(2+) pocket. The Proton donor role is filled by aspartate 318.

This sequence belongs to the UbiD family. Homohexamer. It depends on prenylated FMN as a cofactor. Requires Mn(2+) as cofactor.

The protein resides in the cell membrane. It carries out the reaction a 4-hydroxy-3-(all-trans-polyprenyl)benzoate + H(+) = a 2-(all-trans-polyprenyl)phenol + CO2. It participates in cofactor biosynthesis; ubiquinone biosynthesis. Functionally, catalyzes the decarboxylation of 3-octaprenyl-4-hydroxy benzoate to 2-octaprenylphenol, an intermediate step in ubiquinone biosynthesis. The polypeptide is 3-octaprenyl-4-hydroxybenzoate carboxy-lyase (Burkholderia mallei (strain ATCC 23344)).